Consider the following 261-residue polypeptide: Thioesterase TesA (261 aa).

Active-site residues include Ser104, Asp208, and His236.

Belongs to the thioesterase family.

It catalyses the reaction a fatty acyl-CoA + H2O = a fatty acid + CoA + H(+). Its function is as follows. Involved in the synthesis of both phthiocerol dimycocerosates (PDIMs) and phenolic glycolipids (PGLs), which are structurally related lipids non-covalently bound to the outer cell wall layer of M.tuberculosis and are important virulence factors. The chain is Thioesterase TesA (tesA) from Mycobacterium leprae (strain TN).